Here is a 230-residue protein sequence, read N- to C-terminus: Cytochrome c oxidase subunit 2 (230 aa).

The Mitochondrial intermembrane segment spans residues 1–14; the sequence is MAHPSQLGFQDAAS. A helical membrane pass occupies residues 15 to 45; the sequence is PVMEELLHFHDHALMIVLLISTLVLYIIVAM. Residues 46–59 lie on the Mitochondrial matrix side of the membrane; it reads VSTKLTNMYILDSQ. A helical membrane pass occupies residues 60-87; that stretch reads EIEIVWTVLPAVILILIALPSLRILYLM. At 88 to 230 the chain is on the mitochondrial intermembrane side; that stretch reads DEINDPHLTI…KWSTMMLEDA (143 aa). H161, C196, E198, C200, H204, and M207 together coordinate Cu cation. Mg(2+) is bound at residue E198.

It belongs to the cytochrome c oxidase subunit 2 family. Component of the cytochrome c oxidase (complex IV, CIV), a multisubunit enzyme composed of 14 subunits. The complex is composed of a catalytic core of 3 subunits MT-CO1, MT-CO2 and MT-CO3, encoded in the mitochondrial DNA, and 11 supernumerary subunits COX4I, COX5A, COX5B, COX6A, COX6B, COX6C, COX7A, COX7B, COX7C, COX8 and NDUFA4, which are encoded in the nuclear genome. The complex exists as a monomer or a dimer and forms supercomplexes (SCs) in the inner mitochondrial membrane with NADH-ubiquinone oxidoreductase (complex I, CI) and ubiquinol-cytochrome c oxidoreductase (cytochrome b-c1 complex, complex III, CIII), resulting in different assemblies (supercomplex SCI(1)III(2)IV(1) and megacomplex MCI(2)III(2)IV(2)). Found in a complex with TMEM177, COA6, COX18, COX20, SCO1 and SCO2. Interacts with TMEM177 in a COX20-dependent manner. Interacts with COX20. Interacts with COX16. Cu cation serves as cofactor.

Its subcellular location is the mitochondrion inner membrane. The catalysed reaction is 4 Fe(II)-[cytochrome c] + O2 + 8 H(+)(in) = 4 Fe(III)-[cytochrome c] + 2 H2O + 4 H(+)(out). Functionally, component of the cytochrome c oxidase, the last enzyme in the mitochondrial electron transport chain which drives oxidative phosphorylation. The respiratory chain contains 3 multisubunit complexes succinate dehydrogenase (complex II, CII), ubiquinol-cytochrome c oxidoreductase (cytochrome b-c1 complex, complex III, CIII) and cytochrome c oxidase (complex IV, CIV), that cooperate to transfer electrons derived from NADH and succinate to molecular oxygen, creating an electrochemical gradient over the inner membrane that drives transmembrane transport and the ATP synthase. Cytochrome c oxidase is the component of the respiratory chain that catalyzes the reduction of oxygen to water. Electrons originating from reduced cytochrome c in the intermembrane space (IMS) are transferred via the dinuclear copper A center (CU(A)) of subunit 2 and heme A of subunit 1 to the active site in subunit 1, a binuclear center (BNC) formed by heme A3 and copper B (CU(B)). The BNC reduces molecular oxygen to 2 water molecules using 4 electrons from cytochrome c in the IMS and 4 protons from the mitochondrial matrix. This chain is Cytochrome c oxidase subunit 2 (mt-co2), found in Oncorhynchus mykiss (Rainbow trout).